Here is a 238-residue protein sequence, read N- to C-terminus: Uracil-DNA glycosylase (238 aa).

D72 acts as the Proton acceptor in catalysis.

This sequence belongs to the uracil-DNA glycosylase (UDG) superfamily. UNG family.

The protein resides in the cytoplasm. It carries out the reaction Hydrolyzes single-stranded DNA or mismatched double-stranded DNA and polynucleotides, releasing free uracil.. Functionally, excises uracil residues from the DNA which can arise as a result of misincorporation of dUMP residues by DNA polymerase or due to deamination of cytosine. The protein is Uracil-DNA glycosylase of Chromobacterium violaceum (strain ATCC 12472 / DSM 30191 / JCM 1249 / CCUG 213 / NBRC 12614 / NCIMB 9131 / NCTC 9757 / MK).